We begin with the raw amino-acid sequence, 525 residues long: Erythropoietin receptor (525 aa).

The signal sequence occupies residues 1 to 32; it reads MGAPSSLLFSTAHWRTVPFLLAFWVLLSTGTA. The Extracellular segment spans residues 33 to 249; sequence EDPTMTPEFL…TIATIIDLRL (217 aa). A disulfide bond links C58 and C68. 4 N-linked (GlcNAc...) asparagine glycosylation sites follow: N77, N100, N149, and N185. C91 and C107 are disulfide-bonded. A Fibronectin type-III domain is found at 146–246; the sequence is PPLNVTVKEK…APITIATIID (101 aa). The WSXWS motif motif lies at 232-236; that stretch reads WSDWT. A helical transmembrane segment spans residues 250 to 270; the sequence is LLLLSIAIFVALIAGVGVYIF. Residues 271 to 525 are Cytoplasmic-facing; it reads MRHGMYLKHK…NFLAPIYSQS (255 aa). The Box 1 motif signature appears at 281-289; it reads VWPQVPTPE. Disordered regions lie at residues 434-459 and 492-513; these read APRM…QSIP and LDMS…QNSP. Residues 447 to 459 show a composition bias toward polar residues; sequence ENSVSSDGKQSIP. The ITIM motif motif lies at 487–492; the sequence is LKYAYL.

This sequence belongs to the type I cytokine receptor family. Type 1 subfamily. In terms of tissue distribution, expressed in the ventral blood island from stage 28 through to stage 36. Expressed in the circulating blood by stage 40. In the adult, highly expressed in peripheral blood cells including immature erythrocytes and basophils, and moderately expressed in the hematopoietic organs: liver, kidney and spleen. Expressed at a low level in adult brain.

Its subcellular location is the cell membrane. Functionally, receptor for erythropoietin. Mediates erythropoietin-induced erythroblast proliferation and differentiation. The sequence is that of Erythropoietin receptor from Xenopus laevis (African clawed frog).